A 456-amino-acid chain; its full sequence is tRNA-2-methylthio-N(6)-dimethylallyladenosine synthase (456 aa).

The MTTase N-terminal domain maps to 9-126 (KKLYIKTHGC…LPEMMETKKS (118 aa)). [4Fe-4S] cluster contacts are provided by cysteine 18, cysteine 55, cysteine 89, cysteine 163, cysteine 167, and cysteine 170. Residues 149 to 381 (DADGVSAFVS…QDRITQQAMA (233 aa)) form the Radical SAM core domain. The TRAM domain occupies 384–448 (RRMVGNTERI…PNSLRGSLIA (65 aa)).

It belongs to the methylthiotransferase family. MiaB subfamily. In terms of assembly, monomer. It depends on [4Fe-4S] cluster as a cofactor.

The protein localises to the cytoplasm. The catalysed reaction is N(6)-dimethylallyladenosine(37) in tRNA + (sulfur carrier)-SH + AH2 + 2 S-adenosyl-L-methionine = 2-methylsulfanyl-N(6)-dimethylallyladenosine(37) in tRNA + (sulfur carrier)-H + 5'-deoxyadenosine + L-methionine + A + S-adenosyl-L-homocysteine + 2 H(+). In terms of biological role, catalyzes the methylthiolation of N6-(dimethylallyl)adenosine (i(6)A), leading to the formation of 2-methylthio-N6-(dimethylallyl)adenosine (ms(2)i(6)A) at position 37 in tRNAs that read codons beginning with uridine. This is tRNA-2-methylthio-N(6)-dimethylallyladenosine synthase from Cellvibrio japonicus (strain Ueda107) (Pseudomonas fluorescens subsp. cellulosa).